The primary structure comprises 828 residues: Glycerol-3-phosphate acyltransferase (828 aa).

The HXXXXD motif signature appears at 309 to 314; that stretch reads CHRSHI.

It belongs to the GPAT/DAPAT family.

It localises to the cell inner membrane. It carries out the reaction sn-glycerol 3-phosphate + an acyl-CoA = a 1-acyl-sn-glycero-3-phosphate + CoA. It functions in the pathway phospholipid metabolism; CDP-diacylglycerol biosynthesis; CDP-diacylglycerol from sn-glycerol 3-phosphate: step 1/3. This is Glycerol-3-phosphate acyltransferase from Pseudomonas putida (strain GB-1).